Consider the following 142-residue polypeptide: Putative pre-16S rRNA nuclease (142 aa).

Belongs to the YqgF nuclease family.

It is found in the cytoplasm. Its function is as follows. Could be a nuclease involved in processing of the 5'-end of pre-16S rRNA. This Staphylococcus haemolyticus (strain JCSC1435) protein is Putative pre-16S rRNA nuclease.